Here is a 198-residue protein sequence, read N- to C-terminus: Molybdopterin synthase catalytic subunit (198 aa).

Residues 1 to 27 (MASQPPQEPTPTATSTPSTSALASLPP) are compositionally biased toward low complexity. Residues 1-40 (MASQPPQEPTPTATSTPSTSALASLPPHLDPTTYPRTLTS) are disordered. Substrate contacts are provided by residues 143–144 (HR), K159, and 166–168 (KRE). Positions 176 to 198 (EWRENRERDAEGKVVAEKQEERE) are disordered.

This sequence belongs to the MoaE family. MOCS2B subfamily. In terms of assembly, heterotetramer; composed of 2 small (MOCS2A) and 2 large (MOCS2B) subunits.

The protein resides in the cytoplasm. The enzyme catalyses 2 [molybdopterin-synthase sulfur-carrier protein]-C-terminal-Gly-aminoethanethioate + cyclic pyranopterin phosphate + H2O = molybdopterin + 2 [molybdopterin-synthase sulfur-carrier protein]-C-terminal Gly-Gly + 2 H(+). It functions in the pathway cofactor biosynthesis; molybdopterin biosynthesis. In terms of biological role, catalytic subunit of the molybdopterin synthase complex, a complex that catalyzes the conversion of precursor Z into molybdopterin. Acts by mediating the incorporation of 2 sulfur atoms from thiocarboxylated MOCS2A into precursor Z to generate a dithiolene group. This Aspergillus clavatus (strain ATCC 1007 / CBS 513.65 / DSM 816 / NCTC 3887 / NRRL 1 / QM 1276 / 107) protein is Molybdopterin synthase catalytic subunit.